The primary structure comprises 255 residues: 4-hydroxy-tetrahydrodipicolinate reductase (255 aa).

Residues 9-14 (GFKGKM), 89-91 (GTT), and 115-118 (APNF) contribute to the NAD(+) site. Catalysis depends on His145, which acts as the Proton donor/acceptor. (S)-2,3,4,5-tetrahydrodipicolinate is bound at residue His146. Lys149 serves as the catalytic Proton donor. 155–156 (GT) contacts (S)-2,3,4,5-tetrahydrodipicolinate.

The protein belongs to the DapB family.

It is found in the cytoplasm. The enzyme catalyses (S)-2,3,4,5-tetrahydrodipicolinate + NAD(+) + H2O = (2S,4S)-4-hydroxy-2,3,4,5-tetrahydrodipicolinate + NADH + H(+). It catalyses the reaction (S)-2,3,4,5-tetrahydrodipicolinate + NADP(+) + H2O = (2S,4S)-4-hydroxy-2,3,4,5-tetrahydrodipicolinate + NADPH + H(+). It functions in the pathway amino-acid biosynthesis; L-lysine biosynthesis via DAP pathway; (S)-tetrahydrodipicolinate from L-aspartate: step 4/4. Catalyzes the conversion of 4-hydroxy-tetrahydrodipicolinate (HTPA) to tetrahydrodipicolinate. This chain is 4-hydroxy-tetrahydrodipicolinate reductase, found in Streptococcus suis (strain 98HAH33).